The primary structure comprises 248 residues: 4-hydroxy-tetrahydrodipicolinate reductase (248 aa).

NAD(+) contacts are provided by residues 9–14 (GAKGRV), 77–79 (GTT), and 104–107 (APNF). Catalysis depends on His-134, which acts as the Proton donor/acceptor. His-135 contacts (S)-2,3,4,5-tetrahydrodipicolinate. Residue Lys-138 is the Proton donor of the active site. Position 144–145 (144–145 (GT)) interacts with (S)-2,3,4,5-tetrahydrodipicolinate.

This sequence belongs to the DapB family.

The protein resides in the cytoplasm. It catalyses the reaction (S)-2,3,4,5-tetrahydrodipicolinate + NAD(+) + H2O = (2S,4S)-4-hydroxy-2,3,4,5-tetrahydrodipicolinate + NADH + H(+). The catalysed reaction is (S)-2,3,4,5-tetrahydrodipicolinate + NADP(+) + H2O = (2S,4S)-4-hydroxy-2,3,4,5-tetrahydrodipicolinate + NADPH + H(+). It participates in amino-acid biosynthesis; L-lysine biosynthesis via DAP pathway; (S)-tetrahydrodipicolinate from L-aspartate: step 4/4. Its function is as follows. Catalyzes the conversion of 4-hydroxy-tetrahydrodipicolinate (HTPA) to tetrahydrodipicolinate. This is 4-hydroxy-tetrahydrodipicolinate reductase from Corynebacterium glutamicum (strain R).